A 719-amino-acid polypeptide reads, in one-letter code: Ribosomal RNA large subunit methyltransferase K/L (719 aa).

The THUMP domain maps to Thr-43–Leu-154.

The protein belongs to the methyltransferase superfamily. RlmKL family.

The protein localises to the cytoplasm. It catalyses the reaction guanosine(2445) in 23S rRNA + S-adenosyl-L-methionine = N(2)-methylguanosine(2445) in 23S rRNA + S-adenosyl-L-homocysteine + H(+). The catalysed reaction is guanosine(2069) in 23S rRNA + S-adenosyl-L-methionine = N(2)-methylguanosine(2069) in 23S rRNA + S-adenosyl-L-homocysteine + H(+). Its function is as follows. Specifically methylates the guanine in position 2445 (m2G2445) and the guanine in position 2069 (m7G2069) of 23S rRNA. This Pasteurella multocida (strain Pm70) protein is Ribosomal RNA large subunit methyltransferase K/L.